The primary structure comprises 259 residues: UPF0246 protein NGK_0633 (259 aa).

This sequence belongs to the UPF0246 family.

The chain is UPF0246 protein NGK_0633 from Neisseria gonorrhoeae (strain NCCP11945).